Here is a 286-residue protein sequence, read N- to C-terminus: Expansin-like protein 1 (286 aa).

The signal sequence occupies residues 1–21 (MKTFVLFVILLCLTFLSISKS). The Extracellular portion of the chain corresponds to 22-265 (ETCPFSQSLV…TGASIGTPSD (244 aa)). An Expansin-like EG45 domain is found at 44–145 (AGNCGYENLM…YKVPCGVNGN (102 aa)). Cystine bridges form between C47–C77 and C80–C140. N-linked (GlcNAc...) asparagine glycosylation is found at N82 and N89. The helical transmembrane segment at 266 to 286 (ASSLTLYALFSLTILFLVMLN) threads the bilayer.

It belongs to the expansin family. Expansin A subfamily.

It localises to the membrane. In terms of biological role, may serve to lubricate the movement of the cellulose microfibrils during cell growth and wall extension and/or they may serve to maintain the fluid state of the slug cell wall. The chain is Expansin-like protein 1 (expl1) from Dictyostelium discoideum (Social amoeba).